The following is a 123-amino-acid chain: Large ribosomal subunit protein bL12 (123 aa).

The protein belongs to the bacterial ribosomal protein bL12 family. In terms of assembly, homodimer. Part of the ribosomal stalk of the 50S ribosomal subunit. Forms a multimeric L10(L12)X complex, where L10 forms an elongated spine to which 2 to 4 L12 dimers bind in a sequential fashion. Binds GTP-bound translation factors.

Functionally, forms part of the ribosomal stalk which helps the ribosome interact with GTP-bound translation factors. Is thus essential for accurate translation. This chain is Large ribosomal subunit protein bL12, found in Photorhabdus laumondii subsp. laumondii (strain DSM 15139 / CIP 105565 / TT01) (Photorhabdus luminescens subsp. laumondii).